We begin with the raw amino-acid sequence, 70 residues long: NADH dehydrogenase [ubiquinone] 1 alpha subcomplex subunit 1 (70 aa).

A helical transmembrane segment spans residues 1–21; the sequence is MWFEILPGLAVMGVCLVIPGV.

It belongs to the complex I NDUFA1 subunit family. In terms of assembly, complex I is composed of 45 different subunits.

It is found in the mitochondrion inner membrane. Functionally, accessory subunit of the mitochondrial membrane respiratory chain NADH dehydrogenase (Complex I), that is believed not to be involved in catalysis. Complex I functions in the transfer of electrons from NADH to the respiratory chain. The immediate electron acceptor for the enzyme is believed to be ubiquinone. The protein is NADH dehydrogenase [ubiquinone] 1 alpha subcomplex subunit 1 (NDUFA1) of Cricetulus griseus (Chinese hamster).